A 161-amino-acid chain; its full sequence is Cell division protein SepF 2 (161 aa).

The tract at residues 19–47 (EDSEKAPELSSSRETKTKNQNQSKSLLRS) is disordered. The span at 21-35 (SEKAPELSSSRETKT) shows a compositional bias: basic and acidic residues.

This sequence belongs to the SepF family. Homodimer. Interacts with FtsZ.

The protein localises to the cytoplasm. Functionally, cell division protein that is part of the divisome complex and is recruited early to the Z-ring. Probably stimulates Z-ring formation, perhaps through the cross-linking of FtsZ protofilaments. Its function overlaps with FtsA. This chain is Cell division protein SepF 2, found in Desulforamulus reducens (strain ATCC BAA-1160 / DSM 100696 / MI-1) (Desulfotomaculum reducens).